We begin with the raw amino-acid sequence, 100 residues long: Putative septation protein SpoVG (100 aa).

This sequence belongs to the SpoVG family.

In terms of biological role, could be involved in septation. This is Putative septation protein SpoVG from Staphylococcus aureus (strain JH1).